A 386-amino-acid chain; its full sequence is O-methyltransferase 11 (386 aa).

S-adenosyl-L-homocysteine contacts are provided by S207, G231, D254, D274, and K288. D254 is a binding site for S-adenosyl-L-methionine. The Proton acceptor role is filled by H292.

It belongs to the class I-like SAM-binding methyltransferase superfamily. Cation-independent O-methyltransferase family. Homodimer.

It catalyses the reaction dopamine + S-adenosyl-L-methionine = 4-methoxytyramine + S-adenosyl-L-homocysteine + H(+). The catalysed reaction is 3,4-dihydroxy-5-methoxyphenethylamine + S-adenosyl-L-methionine = 3-hydroxy-4,5-dimethoxyphenethylamine + S-adenosyl-L-homocysteine + H(+). It carries out the reaction 3-hydroxy-4,5-dimethoxyphenethylamine + S-adenosyl-L-methionine = mescaline + S-adenosyl-L-homocysteine + H(+). The enzyme catalyses 4-hydroxy-3,5-dimethoxyphenethylamine + S-adenosyl-L-methionine = mescaline + S-adenosyl-L-homocysteine + H(+). It functions in the pathway aromatic compound metabolism. Its pathway is alkaloid biosynthesis. In terms of biological role, O-methyltransferase participating in the biosynthesis of natural products derived from phenylethylamine, including mescaline, a natural hallucinogen potentially used in psychotherapeutic treatments. Catalyzes the O-methylation of mescaline para hydroxyl groups, using dopamine, 3,4-dihydroxy-5-methoxyphenethylamine, 3-hydroxy-4,5-dimethoxyphenethylamine and 4-hydroxy-3,5-dimethoxyphenethylamine as substrates. The chain is O-methyltransferase 11 from Lophophora williamsii (Peyote).